The primary structure comprises 438 residues: Acid phosphatase type 7 (438 aa).

Residues 1–26 (MHPLPGYWSCYCLLLLFSLGVQGSLG) form the signal peptide. Fe cation-binding residues include Asp-141, Asp-170, and Tyr-173. Asp-170 contributes to the Zn(2+) binding site. Asn-205 lines the Zn(2+) pocket. N-linked (GlcNAc...) asparagine glycosylation is present at Asn-211. The Zn(2+) site is built by His-286 and His-333. His-335 contributes to the Fe cation binding site. Asn-350 and Asn-404 each carry an N-linked (GlcNAc...) asparagine glycan.

Belongs to the metallophosphoesterase superfamily. Purple acid phosphatase family. Fe cation serves as cofactor. Requires Zn(2+) as cofactor.

The protein resides in the secreted. It carries out the reaction a phosphate monoester + H2O = an alcohol + phosphate. In Homo sapiens (Human), this protein is Acid phosphatase type 7.